A 476-amino-acid polypeptide reads, in one-letter code: MRIDRFEFAFTFNDVILLPGKTEIEPSNVDLTTRIGNIALSIPILSSPMDTVTEEEMSIAMARMGGLGILHRNCSVEEQVNMAKAVKRAESFIIRDVITVSPEDSVEEARRLMREHGISGLPVIVGRKLVGIVTRRDVYFAENGSLLVKDIMTKDPITVGPEITPQEARKIMARYKIEKLPVVSESGELIGLVTAKDVFYRESHPFATRDEEGRLRVGAAISPFDIDRAKTLAPYVDVLVTDVAHFHNENVISATKRIIDEVGVPVIAGNIGTYEAAEEAITRLDIIGLRVGIGSGSICTTGEVTGVAAPTLYAVASASEAVRKYSKDVAVIADGGIRGPGEAAKAFAMGADAVMLGYALAGTKEAPGSTMMIGGKMYKIYRGMGSPSARSKRFAMDRYSKPSKDIAEGIEGLVPYRGDVTTVVDRFVAGLKAAFGYVGAANISEMKSKARVALISHSGMSEIAPHDVKPLEKISD.

2 CBS domains span residues 93–151 (IIRD…VKDI) and 152–211 (MTKD…TRDE). NAD(+) contacts are provided by residues D242 and 292–294 (GIG). The K(+) site is built by G294 and G296. Residue S297 coordinates IMP. C299 serves as a coordination point for K(+). The active-site Thioimidate intermediate is the C299. Residues 334–336 (DGG), 357–358 (GY), and 381–385 (YRGMG) each bind IMP. The active-site Proton acceptor is the R398. E408 is a binding site for IMP. E462 is a binding site for K(+).

The protein belongs to the IMPDH/GMPR family. Homotetramer. K(+) serves as cofactor.

The catalysed reaction is IMP + NAD(+) + H2O = XMP + NADH + H(+). The protein operates within purine metabolism; XMP biosynthesis via de novo pathway; XMP from IMP: step 1/1. Its activity is regulated as follows. Mycophenolic acid (MPA) is a non-competitive inhibitor that prevents formation of the closed enzyme conformation by binding to the same site as the amobile flap. In contrast, mizoribine monophosphate (MZP) is a competitive inhibitor that induces the closed conformation. MPA is a potent inhibitor of mammalian IMPDHs but a poor inhibitor of the bacterial enzymes. MZP is a more potent inhibitor of bacterial IMPDH. In terms of biological role, catalyzes the conversion of inosine 5'-phosphate (IMP) to xanthosine 5'-phosphate (XMP), the first committed and rate-limiting step in the de novo synthesis of guanine nucleotides, and therefore plays an important role in the regulation of cell growth. In Korarchaeum cryptofilum (strain OPF8), this protein is Inosine-5'-monophosphate dehydrogenase.